A 186-amino-acid chain; its full sequence is NADH-quinone oxidoreductase subunit B (186 aa).

Cys-44, Cys-45, Cys-110, and Cys-139 together coordinate [4Fe-4S] cluster.

The protein belongs to the complex I 20 kDa subunit family. In terms of assembly, NDH-1 is composed of 14 different subunits. Subunits NuoB, C, D, E, F, and G constitute the peripheral sector of the complex. The cofactor is [4Fe-4S] cluster.

Its subcellular location is the cell inner membrane. The catalysed reaction is a quinone + NADH + 5 H(+)(in) = a quinol + NAD(+) + 4 H(+)(out). Its function is as follows. NDH-1 shuttles electrons from NADH, via FMN and iron-sulfur (Fe-S) centers, to quinones in the respiratory chain. The immediate electron acceptor for the enzyme in this species is believed to be ubiquinone. Couples the redox reaction to proton translocation (for every two electrons transferred, four hydrogen ions are translocated across the cytoplasmic membrane), and thus conserves the redox energy in a proton gradient. This Leptospira biflexa serovar Patoc (strain Patoc 1 / Ames) protein is NADH-quinone oxidoreductase subunit B.